The chain runs to 165 residues: Cytochrome c-550-like protein (165 aa).

An N-terminal signal peptide occupies residues 1-30 (MLNKSLLIRFVLTILIIVQVIIFDTQPVQA). The heme c site is built by cysteine 75, cysteine 78, histidine 79, and cysteine 129.

Belongs to the cytochrome c family. PsbV subfamily. Heme c is required as a cofactor.

Its subcellular location is the cellular thylakoid membrane. Its function is as follows. Possible low-potential cytochrome c. The chain is Cytochrome c-550-like protein (psbV2) from Trichodesmium erythraeum (strain IMS101).